A 573-amino-acid chain; its full sequence is Myrcene synthase TPS5FN (573 aa).

(2E)-geranyl diphosphate is bound by residues arginine 286, aspartate 323, aspartate 327, arginine 464, and aspartate 467. Positions 323 and 327 each coordinate Mg(2+). Positions 323-327 match the DDXXD motif motif; that stretch reads DDIFD. Mg(2+) contacts are provided by aspartate 467, threonine 471, and glutamate 475.

Belongs to the terpene synthase family. Tpsb subfamily. Mg(2+) is required as a cofactor. It depends on Mn(2+) as a cofactor. In terms of tissue distribution, expressed in glandular trichomes two to four weeks after flowering onset.

It catalyses the reaction (2E)-geranyl diphosphate = beta-myrcene + diphosphate. The catalysed reaction is (2E)-geranyl diphosphate = (1R,5R)-alpha-pinene + diphosphate. The enzyme catalyses (2E)-geranyl diphosphate = sabinene + diphosphate. It carries out the reaction (2E)-geranyl diphosphate = (4S)-limonene + diphosphate. It catalyses the reaction (2E)-geranyl diphosphate = terpinolene + diphosphate. The catalysed reaction is (2E)-geranyl diphosphate = camphene + diphosphate. It participates in secondary metabolite biosynthesis; terpenoid biosynthesis. Involved in monoterpene (C10) olefins biosynthesis, constituants of cannabinoids and terpenoids-rich resins. Catalyzes mainly the conversion of (2E)-geranyl diphosphate to beta-myrcene, and also produces minor products such as alpha-pinene, camphene, sabinene, limonene and terpinolene. This Cannabis sativa (Hemp) protein is Myrcene synthase TPS5FN.